The chain runs to 1415 residues: MKMLDLYGYTSIAQSFDKICISIASPESIRAMSYGEIKDISTTNYRTFKVEKGGLFCPKIFGPVNDDECLCGKYRKKRYRGIVCEKCGVEVTSSKVRRERMGHIELVSPVAHVWFLKSLPSRIGALLDMPMKSIESILYSGDFVVIDPMTTPFSKGEVISESVYNQARDAYGDEGFIALTGAEAIRELLVRLDLGAIRAGLRSELESTSSEMKRKKVVKRLRIIENFIASGNRPEWMILTVIPVLPPDLRPLVSLENGRPAVSDLNHHYRTIINRNNRLEKLLKLNPPAIMIRNEKRMLQEAVDGLFDSSRRSYVSSRAGSMGYKKSLSDMLKGKQGRFRQNLLGKRVDYSGRSVIVVGPGLKLHQCGLPKKMALELFKPFICSKLKMYGVAPTVKLANKMIQSEKPEVWDVLDEVIREHPILLNRAPTLHRLGLQAFDPVLIEGKAIQLHPLVCSAFNADFDGDQMAVHVPLSLEAQLEARVLMMSTNNILSPSNGRPIIVPSKDIVLGIYYLTLQRAQAPDQEVMSFGELSHVEYALHEGIVHTSSKIKYRMQRCNSDGTIVSEVVETTPGRLILWQIFPQHKDLTFDLVNQVLTVKEITSIVDLVYRSCGQRETVEFSDKLMCLGFQYASQSGISFGCKDMIIPDTKAAHVENASEKIKEFSIQYQDGLITRSERYNKVVDEWSKCTDLIARDMMKAISLSDEEGKLNSIYMMANSGARGSASQMKQLAGMRGLMAKPSGEIIETPIISNFREGLSVFEYFNSTHGARKGLADTALKTANSGYLTRRLVDVAQDCTVVEYDCKTKDGVVARAVIEGGAVVATLDSVVLGRVAAVDTYNPVTEELLLSAGELIDEGKVEKIRVAGLDAVRVRSPLTCESKKGICSLCYGRDLAVGDLVSIGEAVGVIAAQSVGEPGTQLTMRTFHVGGTAMRGVEVSNLIAVLDAEVKLVNSNVVTDKYGNQIVMSRSCEVVLLDSVGNEKMRHSVPYGAKLYVSDGQPVKMMDKMAEWDPYTIPIITEKTGTIKYVDLIYGVSINEVLDESTGISNRVVIDWKLHLQGANLRPRLVLLDEDGNIATLYNDLEASYFVPIGAVLNVQDGQKVHAGDVITRIPRESIKTRDITGGLPRVIELFEARRPKEHAIVSDVDGYVEFGKDYYRSKRRIFIRPVDKSLPAVEYLVPKGKHTIVNEGDFVHKGDLLMDGDPDQHDILRVLGAEALASYMISEIQQVYRLQGVRIDNKHIEVILRQMLQKVEITDPGDTMYLVGEHAGREEVMRLNRKLEEAGKKPVAYVPILQGITKASLDTNSFISAASFQETTKVLTEAAFSGKEDPLYGLKENVIVGRLIPAGTGFIMNKVKKLAMLDQSDYATYYNSELREIMGDLGDELIAEGEAASPGRSGDGYLGNGGGVVDY.

Zn(2+)-binding residues include C69, C71, C84, and C87. The Mg(2+) site is built by D461, D463, and D465. Zn(2+) contacts are provided by C805, C879, C886, and C889.

Belongs to the RNA polymerase beta' chain family. As to quaternary structure, the RNAP catalytic core consists of 2 alpha, 1 beta, 1 beta' and 1 omega subunit. When a sigma factor is associated with the core the holoenzyme is formed, which can initiate transcription. Mg(2+) serves as cofactor. The cofactor is Zn(2+).

It catalyses the reaction RNA(n) + a ribonucleoside 5'-triphosphate = RNA(n+1) + diphosphate. Functionally, DNA-dependent RNA polymerase catalyzes the transcription of DNA into RNA using the four ribonucleoside triphosphates as substrates. In Anaplasma marginale (strain Florida), this protein is DNA-directed RNA polymerase subunit beta'.